Here is a 256-residue protein sequence, read N- to C-terminus: uncharacterized protein (256 aa).

This is an uncharacterized protein from Saccharomyces cerevisiae (strain ATCC 204508 / S288c) (Baker's yeast).